The following is a 258-amino-acid chain: uncharacterized protein (258 aa).

This is an uncharacterized protein from Methanocaldococcus jannaschii (strain ATCC 43067 / DSM 2661 / JAL-1 / JCM 10045 / NBRC 100440) (Methanococcus jannaschii).